Reading from the N-terminus, the 265-residue chain is Apolipoprotein A-I (265 aa).

The signal sequence occupies residues 1–20; that stretch reads METKAVVLTLAVLFLTGSQA. A run of 2 repeats spans residues 69 to 90 and 91 to 112. The segment at 69–265 is 10 X approximate tandem repeats; the sequence is LKILDNWDTL…DEATKKLNSQ (197 aa). One copy of the 3; half-length repeat lies at 113–123; that stretch reads KDLEELKQKVQ. Tandem repeats lie at residues 124–145, 146–167, 168–189, 190–209, and 210–230. A Methionine sulfoxide modification is found at Met195. The stretch at 231–241 is one 9; half-length repeat; that stretch reads PALEDFRQGLM. Methionine sulfoxide is present on Met241. The stretch at 242–265 is repeat 10; sequence PVLEGFQKSVLAALDEATKKLNSQ.

Belongs to the apolipoprotein A1/A4/E family. As to quaternary structure, homodimer. Interacts with APOA1BP and CLU. Component of a sperm activating protein complex (SPAP), consisting of APOA1, an immunoglobulin heavy chain, an immunoglobulin light chain and albumin. Interacts with NDRG1. Interacts with SCGB3A2. Interacts with NAXE and YJEFN3. Glycosylated. Post-translationally, palmitoylated. In terms of processing, phosphorylation sites are present in the extracellular medium. Major protein of plasma HDL, also found in chylomicrons.

Its subcellular location is the secreted. Its function is as follows. Participates in the reverse transport of cholesterol from tissues to the liver for excretion by promoting cholesterol efflux from tissues and by acting as a cofactor for the lecithin cholesterol acyltransferase (LCAT). As part of the SPAP complex, activates spermatozoa motility. The protein is Apolipoprotein A-I (APOA1) of Orycteropus afer (Aardvark).